The following is a 288-amino-acid chain: Phenazine biosynthesis-like domain-containing protein (288 aa).

Residue Glu46 is part of the active site.

The protein belongs to the PhzF family. In terms of assembly, interacts with UNRIP/MAWD.

The protein is Phenazine biosynthesis-like domain-containing protein (PBLD) of Pongo abelii (Sumatran orangutan).